Reading from the N-terminus, the 535-residue chain is Flavin-containing monooxygenase 1 (535 aa).

Alanine 2 is modified (N-acetylalanine). Over 2 to 513 the chain is Lumenal; sequence AKRVAIVGAG…TRIVQESSSP (512 aa). Residues 9-13, glutamate 32, 40-41, and 61-62 contribute to the FAD site; these read GAGVS, LW, and NS. NADP(+)-binding positions include 60 to 61 and 195 to 198; these read SN and SGTD. Residues 514–534 traverse the membrane as a helical segment; that stretch reads FESLLKLFAVLALLVSVFLIF. A topological domain (cytoplasmic) is located at residue leucine 535.

It belongs to the FMO family. FAD serves as cofactor. Liver.

The protein localises to the endoplasmic reticulum membrane. The enzyme catalyses hypotaurine + NADPH + O2 + H(+) = taurine + NADP(+) + H2O. It carries out the reaction hypotaurine + NADH + O2 + H(+) = taurine + NAD(+) + H2O. The catalysed reaction is trimethylamine + NADPH + O2 = trimethylamine N-oxide + NADP(+) + H2O. It catalyses the reaction N,N-dimethylaniline + NADPH + O2 + H(+) = N,N-dimethylaniline N-oxide + NADP(+) + H2O. Its function is as follows. Broad spectrum monooxygenase that catalyzes the oxygenation of a wide variety of nitrogen- and sulfur-containing compounds including xenobiotics. Catalyzes the S-oxygenation of hypotaurine to produce taurine, an organic osmolyte involved in cell volume regulation as well as a variety of cytoprotective and developmental processes. In vitro, catalyzes the N-oxygenation of trimethylamine (TMA) to produce trimethylamine N-oxide (TMAO) and could therefore participate to the detoxification of this compound that is generated by the action of gut microbiota from dietary precursors such as choline, choline containing compounds, betaine or L-carnitine. The polypeptide is Flavin-containing monooxygenase 1 (FMO1) (Oryctolagus cuniculus (Rabbit)).